The following is a 630-amino-acid chain: ATP-dependent zinc metalloprotease FtsH (630 aa).

Residues 1–7 (MNNFMKN) are Cytoplasmic-facing. Residues 8 to 28 (IGFYLVLIALSILVAQFFVDT) traverse the membrane as a helical segment. Residues 29–111 (DVNTIVDTDV…KTEPEPTAPW (83 aa)) are Periplasmic-facing. The helical transmembrane segment at 112–132 (WTGMLAYILPIILLIGAWFFI) threads the bilayer. The Cytoplasmic segment spans residues 133–630 (MQRMQGGGSQ…ENREHENNDK (498 aa)). 203–210 (GPPGTGKT) contacts ATP. Zn(2+) is bound at residue H425. Residue E426 is part of the active site. Zn(2+)-binding residues include H429 and D501. The interval 601-630 (KLIKGEPLDDDSIDNSTDENENREHENNDK) is disordered. Positions 608–619 (LDDDSIDNSTDE) are enriched in acidic residues. The segment covering 620-630 (NENREHENNDK) has biased composition (basic and acidic residues).

The protein in the central section; belongs to the AAA ATPase family. It in the C-terminal section; belongs to the peptidase M41 family. Homohexamer. The cofactor is Zn(2+).

The protein localises to the cell inner membrane. Acts as a processive, ATP-dependent zinc metallopeptidase for both cytoplasmic and membrane proteins. Plays a role in the quality control of integral membrane proteins. The protein is ATP-dependent zinc metalloprotease FtsH of Halothermothrix orenii (strain H 168 / OCM 544 / DSM 9562).